The primary structure comprises 128 residues: MPQLLSRRVGRGSTRTAARMRRHFRVRKKISGTPERPRLVVHRSARHVFVQIVDDTRGHTLASASSFEPEMRSFAGDKTAKARRVGQLIAERAKAAGITTVVFDRAGYRYHGRVAAIADGAREGGLVL.

It belongs to the universal ribosomal protein uL18 family. In terms of assembly, part of the 50S ribosomal subunit; part of the 5S rRNA/L5/L18/L25 subcomplex. Contacts the 5S and 23S rRNAs.

This is one of the proteins that bind and probably mediate the attachment of the 5S RNA into the large ribosomal subunit, where it forms part of the central protuberance. This chain is Large ribosomal subunit protein uL18, found in Acidothermus cellulolyticus (strain ATCC 43068 / DSM 8971 / 11B).